The chain runs to 212 residues: Pyridoxine/pyridoxamine 5'-phosphate oxidase (212 aa).

Residues 8 to 11 and Lys66 each bind substrate; that span reads RRNY. Residues 61 to 66, 76 to 77, Arg82, Lys83, and Gln105 each bind FMN; these read RIVLLK and FT. Positions 123, 127, and 131 each coordinate substrate. FMN-binding positions include 140–141 and Trp184; that span reads QS. 190–192 is a binding site for substrate; it reads RLH. Arg194 provides a ligand contact to FMN.

The protein belongs to the pyridoxamine 5'-phosphate oxidase family. Homodimer. FMN is required as a cofactor.

It carries out the reaction pyridoxamine 5'-phosphate + O2 + H2O = pyridoxal 5'-phosphate + H2O2 + NH4(+). The catalysed reaction is pyridoxine 5'-phosphate + O2 = pyridoxal 5'-phosphate + H2O2. Its pathway is cofactor metabolism; pyridoxal 5'-phosphate salvage; pyridoxal 5'-phosphate from pyridoxamine 5'-phosphate: step 1/1. The protein operates within cofactor metabolism; pyridoxal 5'-phosphate salvage; pyridoxal 5'-phosphate from pyridoxine 5'-phosphate: step 1/1. Functionally, catalyzes the oxidation of either pyridoxine 5'-phosphate (PNP) or pyridoxamine 5'-phosphate (PMP) into pyridoxal 5'-phosphate (PLP). The polypeptide is Pyridoxine/pyridoxamine 5'-phosphate oxidase (Cupriavidus metallidurans (strain ATCC 43123 / DSM 2839 / NBRC 102507 / CH34) (Ralstonia metallidurans)).